The following is a 230-amino-acid chain: Sugar fermentation stimulation protein homolog (230 aa).

This sequence belongs to the SfsA family.

The chain is Sugar fermentation stimulation protein homolog from Pyrococcus furiosus (strain ATCC 43587 / DSM 3638 / JCM 8422 / Vc1).